We begin with the raw amino-acid sequence, 57 residues long: Aspartyl-phosphate phosphatase YnzD (57 aa).

It belongs to the spo0E family.

Functionally, aspartyl-phosphate phosphatase which specifically dephosphorylates the sporulation transcription factor Spo0A-P and negatively regulates the sporulation initiation pathway in order to control the proper timing of sporulation. This chain is Aspartyl-phosphate phosphatase YnzD (ynzD), found in Bacillus subtilis (strain 168).